The following is a 138-amino-acid chain: Basic phospholipase A2 homolog 7 (138 aa).

Residues 1 to 16 form the signal peptide; the sequence is MRTLWLMAVLLVGVEG. 6 cysteine pairs are disulfide-bonded: cysteine 42/cysteine 131, cysteine 44/cysteine 60, cysteine 59/cysteine 111, cysteine 65/cysteine 138, cysteine 66/cysteine 104, and cysteine 91/cysteine 102. An important for membrane-damaging activities in eukaryotes and bacteria; heparin-binding region spans residues 121 to 133; it reads KKKKINLKLFCKK.

It belongs to the phospholipase A2 family. Group II subfamily. K49 sub-subfamily. In terms of tissue distribution, expressed by the venom gland.

The protein localises to the secreted. Its function is as follows. Snake venom phospholipase A2 homolog that lacks enzymatic activity. Is myotoxic and displays edema-inducing activities. A model of myotoxic mechanism has been proposed: an apo Lys49-PLA2 is activated by the entrance of a hydrophobic molecule (e.g. fatty acid) at the hydrophobic channel of the protein leading to a reorientation of a monomer. This reorientation causes a transition between 'inactive' to 'active' states, causing alignment of C-terminal and membrane-docking sites (MDoS) side-by-side and putting the membrane-disruption sites (MDiS) in the same plane, exposed to solvent and in a symmetric position for both monomers. The MDoS region stabilizes the toxin on membrane by the interaction of charged residues with phospholipid head groups. Subsequently, the MDiS region destabilizes the membrane with penetration of hydrophobic residues. This insertion causes a disorganization of the membrane, allowing an uncontrolled influx of ions (i.e. calcium and sodium), and eventually triggering irreversible intracellular alterations and cell death. In Craspedocephalus gramineus (Bamboo pit viper), this protein is Basic phospholipase A2 homolog 7.